We begin with the raw amino-acid sequence, 757 residues long: Inhibitor of nuclear factor kappa-B kinase subunit beta (757 aa).

The Protein kinase domain occupies 15-300; sequence WEMKERLGTG…DPQYGPNGCF (286 aa). ATP contacts are provided by residues 21-29 and K44; that span reads LGTGGFGNV. Catalysis depends on D145, which acts as the Proton acceptor. K163 participates in a covalent cross-link: Glycyl lysine isopeptide (Lys-Gly) (interchain with G-Cter in ubiquitin). S177 is modified (phosphoserine; by TBK1 and PKC/PRKCZ). C179 carries the S-nitrosocysteine modification. S181 is modified (phosphoserine; by TBK1, PKC/PRKCZ and PDPK1). Residue P191 is modified to Hydroxyproline. The segment at 458-479 is leucine-zipper; that stretch reads LLRNNSCLSKMKNAMASTAQQL. S670 carries the post-translational modification Phosphoserine; by autocatalysis. Phosphoserine is present on S672. Phosphoserine; by autocatalysis occurs at positions 675, 682, 689, 692, 697, 705, 733, and 740. The disordered stretch occupies residues 683–703; the sequence is HPGQLMSQPSSACDSLPESDK. The NEMO-binding stretch occupies residues 737–742; that stretch reads LDWSWL.

The protein belongs to the protein kinase superfamily. Ser/Thr protein kinase family. I-kappa-B kinase subfamily. Component of the I-kappa-B-kinase (IKK) core complex consisting of CHUK, IKBKB and IKBKG; probably four alpha/CHUK-beta/IKBKB dimers are associated with four gamma/IKBKG subunits. The IKK core complex seems to associate with regulatory or adapter proteins to form a IKK-signalosome holo-complex. The IKK complex associates with TERF2IP/RAP1, leading to promote IKK-mediated phosphorylation of RELA/p65. Part of a complex composed of NCOA2, NCOA3, CHUK/IKKA, IKBKB, IKBKG and CREBBP. Part of a 70-90 kDa complex at least consisting of CHUK/IKKA, IKBKB, NFKBIA, RELA, ELP1 and MAP3K14. Found in a membrane raft complex, at least composed of BCL10, CARD11, DPP4 and IKBKB. Interacts with SQSTM1 through PRKCZ or PRKCI. Forms an NGF-induced complex with IKBKB, PRKCI and TRAF6. May interact with MAVS/IPS1. Interacts with NALP2. Interacts with TICAM1. Interacts with FAF1; the interaction disrupts the IKK complex formation. Interacts with ATM. Part of a ternary complex consisting of TANK, IKBKB and IKBKG. Interacts with NIBP; the interaction is direct. Interacts with ARRB1 and ARRB2. Interacts with TRIM21. Interacts with NLRC5; prevents IKBKB phosphorylation and kinase activity. Interacts with PDPK1. Interacts with EIF2AK2/PKR. The phosphorylated form interacts with PPM1A and PPM1B. Interacts with ZNF268 isoform 2; the interaction is further increased in a TNF-alpha-dependent manner. Interacts with IKBKE. Interacts with ZC3H12A. Interacts with AKAP13. Interacts with LRRC14; disrupts IKBKB-IKBKG interaction preventing I-kappa-B-kinase (IKK) core complex formation and leading to a decrease of IKBKB phosphorylation and NF-kappaB activation. Interacts with SASH1. Interacts with ARFIP2. Interacts with FKBP5. Interacts with kinase TBK1; the complex interacts with STAT1, leading to phosphorylation of STAT1 on 'Thr-748' by IKBKB. Post-translationally, upon cytokine stimulation, phosphorylated on Ser-177 and Ser-181 by MEKK1 and/or MAP3K14/NIK as well as TBK1 and PRKCZ; which enhances activity. Phosphorylated by MAP3K7/TAK1 in response to NOD1 and NOD2 signaling, promoting activation and phosphorylation of NF-kappa-B inhibitors, leading to NF-kappa-B activation. Once activated, autophosphorylates on the C-terminal serine cluster; which decreases activity and prevents prolonged activation of the inflammatory response. Phosphorylated by the IKK-related kinases TBK1 and IKBKE, which is associated with reduced CHUK/IKKA and IKBKB activity and NF-kappa-B-dependent gene transcription. Dephosphorylated at Ser-177 and Ser-181 by PPM1A and PPM1B. In terms of processing, ubiquitinated. Monoubiquitination involves TRIM21 that leads to inhibition of Tax-induced NF-kappa-B signaling. 'Ser-163' may not serve as a monoubiquitination site. Ubiquitination on 'Ser-163' may modulate phosphorylation on C-terminal serine residues. Hydroxylated by PHD1/EGLN2, loss of hydroxylation under hypoxic conditions results in activation of NF-kappa-B. In terms of tissue distribution, detected in heart (at protein level). Expressed in liver, kidney and spleen.

The protein resides in the cytoplasm. The protein localises to the nucleus. It localises to the membrane raft. The catalysed reaction is L-seryl-[I-kappa-B protein] + ATP = O-phospho-L-seryl-[I-kappa-B protein] + ADP + H(+). It catalyses the reaction L-seryl-[protein] + ATP = O-phospho-L-seryl-[protein] + ADP + H(+). It carries out the reaction L-threonyl-[protein] + ATP = O-phospho-L-threonyl-[protein] + ADP + H(+). Functionally, serine kinase that plays an essential role in the NF-kappa-B signaling pathway which is activated by multiple stimuli such as inflammatory cytokines, bacterial or viral products, DNA damages or other cellular stresses. Acts as a part of the canonical IKK complex in the conventional pathway of NF-kappa-B activation. Phosphorylates inhibitors of NF-kappa-B on 2 critical serine residues. These modifications allow polyubiquitination of the inhibitors and subsequent degradation by the proteasome. In turn, free NF-kappa-B is translocated into the nucleus and activates the transcription of hundreds of genes involved in immune response, growth control, or protection against apoptosis. In addition to the NF-kappa-B inhibitors, phosphorylates several other components of the signaling pathway including NEMO/IKBKG, NF-kappa-B subunits RELA and NFKB1, as well as IKK-related kinases TBK1 and IKBKE. IKK-related kinase phosphorylations may prevent the overproduction of inflammatory mediators since they exert a negative regulation on canonical IKKs. Phosphorylates FOXO3, mediating the TNF-dependent inactivation of this pro-apoptotic transcription factor. Also phosphorylates other substrates including NAA10, NCOA3, BCL10 and IRS1. Phosphorylates RIPK1 at 'Ser-25' which represses its kinase activity and consequently prevents TNF-mediated RIPK1-dependent cell death. Phosphorylates the C-terminus of IRF5, stimulating IRF5 homodimerization and translocation into the nucleus. Following bacterial lipopolysaccharide (LPS)-induced TLR4 endocytosis, phosphorylates STAT1 at 'Thr-748' which restricts interferon signaling and anti-inflammatory responses and promotes innate inflammatory responses. IKBKB-mediated phosphorylation of STAT1 at 'Thr-748' promotes binding of STAT1 to the ARID5A promoter, resulting in transcriptional activation of ARID5A and subsequent ARID5A-mediated stabilization of IL6. It also promotes binding of STAT1 to the IL12B promoter and activation of IL12B transcription. In Mus musculus (Mouse), this protein is Inhibitor of nuclear factor kappa-B kinase subunit beta (Ikbkb).